The primary structure comprises 786 residues: Diamine oxidase [copper-containing] 1, peroxisomal (786 aa).

419–430 is a binding site for substrate; sequence AFDAGEDGLGKN. The Proton acceptor role is filled by Asp421. A disulfide bridge connects residues Cys440 and Cys466. 502-507 contacts substrate; sequence VANYEY. The Schiff-base intermediate with substrate; via topaquinone role is filled by Tyr505. Tyr505 is modified (2',4',5'-topaquinone). 2 residues coordinate Cu cation: His555 and His557. Residues Asp710 and Ile711 each contribute to the Mn(2+) site. His721 contributes to the Cu cation binding site.

This sequence belongs to the copper/topaquinone oxidase family. As to quaternary structure, homodimer. Cu cation serves as cofactor. Zn(2+) is required as a cofactor. The cofactor is L-topaquinone. Post-translationally, topaquinone (TPQ) is generated by copper-dependent autoxidation of a specific tyrosyl residue. Mainly expressed in roots, and, to a lower extent, in leaves and stems.

It is found in the peroxisome. The enzyme catalyses a primary methyl amine + O2 + H2O = an aldehyde + H2O2 + NH4(+). It carries out the reaction N-methylputrescine + O2 + H2O = 4-methylaminobutanal + H2O2 + NH4(+). It functions in the pathway alkaloid biosynthesis; nicotine biosynthesis. Its pathway is amine and polyamine degradation; putrescine degradation. Its function is as follows. Involved in putrescine catabolism in peroxisomes. May also be involved in the biosynthesis of pyridine alkaloid natural products, leading mainly to the production of anabasine, anatabine, nicotine and nornicotine, effective deterrents against herbivores with antiparasitic and pesticide properties (neurotoxins); nornicotine serves as the precursor in the synthesis of the carcinogen compound N'-nitrosonornicotine (NNN). Oxidizes preferentially non-N-methylated amines. The protein is Diamine oxidase [copper-containing] 1, peroxisomal of Nicotiana tabacum (Common tobacco).